The primary structure comprises 72 residues: Variant surface glycoprotein MITAT 1.1000BC (72 aa).

The GPI-anchor amidated aspartate moiety is linked to residue D50. Positions G51–F72 are cleaved as a propeptide — removed in mature form.

The protein localises to the cell membrane. Functionally, VSG forms a coat on the surface of the parasite. The trypanosome evades the immune response of the host by expressing a series of antigenically distinct VSGs from an estimated 1000 VSG genes. In Trypanosoma brucei brucei, this protein is Variant surface glycoprotein MITAT 1.1000BC.